A 329-amino-acid chain; its full sequence is Flotillin-like protein FloA (329 aa).

2 consecutive transmembrane segments (helical) span residues 4–24 and 27–47; these read FIPFIILIGVAFVILSIILSF and VGLWITAQFSGVKVGIFTLVG.

This sequence belongs to the flotillin-like FloA family. In terms of assembly, homooligomerizes.

The protein resides in the cell membrane. It is found in the membrane raft. Functionally, found in functional membrane microdomains (FMM) that may be equivalent to eukaryotic membrane rafts. FMMs are highly dynamic and increase in number as cells age. Flotillins are thought to be important factors in membrane fluidity. This is Flotillin-like protein FloA from Alkaliphilus metalliredigens (strain QYMF).